Here is a 1048-residue protein sequence, read N- to C-terminus: MPPPPFRDAPSSAKSSQRYTPLHESIPEELNDKQYSSDADSLPLSDPSDGEDDSEIRLRRVDRNGTRSNQATAYVPVVRKSGDVEAYFDSIAEAELELLSASRQYDGVDDDDDDSDGYGVGVKRGQRQGLLKRTHDGRTGWRTVYYSKYWWRALIGVVVVLVLLVLVFLGLARSKQVGDELDYSMIPAESWFPSPRGGALKEWAADYQKAALLVGNMTLIEKVNITTGTGWQMGLCVGNTGPAESVHFPSLCLQDGPMGIRYADHISAFPPGLTTGATWNRDLIRERGIAMGLEARLKGVNVLLGPSMGPLGMMPAGGRNWEAFGSDPVLQGVAAAETIKGIQSNGVMATAKHFVMNEQEHFRQPFEWGIPTALSSNVGDRALHEVFAWPFAESIRADVASVMCAYQMVNNSHACENSKLLNGILKDELGFQGFVQSDWLAQRSGINSALGGLDMSMPGDGLHWADGKSLWGSELTRAVLNTSIPMERLNDMVTRIVAAWYHLGQDQWERPPPDGEGGPNFSSWTDDQTGWWQQASVEAGDQDGGWGIVNKYVDAGAGHGDIARKVAAEGIVLVKNNNNTLPLSRSPPSPYRIGIYGDDAGPALGPNACPDRGCSQGTLASGWGSGTVEFPFLVSPLEALQGAWETEVEITPYLQNMVMPVSVQDKDLCLVFANANSGEGYIHAGGIHGDRNDLFLQKGGDTLIQAVANNCAGPTVVVVHAVGPVVVESWIDLPGVDAVLFAHLPGQESGNALVDVLFGDVDASGRLPYTVGKSLEDYGPGAQVLYENNAPVPQVDFLDALYIDYRYFDKFNITPRYEFGFGLSYTSFELSKLYIKSMQWKSRLPKSRPQDQVSPPEYDTRPPVNENVLFPEGFHALSKYVYSYLPSLDGTAAANYTEYPDGYDLPRQPSEAGGDLGGNPSLYEEMAKVQVQVANTGARAGQTVVQAYVSFPSDVVEEGDLVEVPVDEKGETVTFVPSKEQVEFPDRVLRNFTKIALEPGEKKTVEMTLSRKDLSYWSARQQNWVMPDGDFQIWVGQSSRDLPLHGKY.

The segment at 1–54 is disordered; the sequence is MPPPPFRDAPSSAKSSQRYTPLHESIPEELNDKQYSSDADSLPLSDPSDGEDDS. Topologically, residues 1–150 are cytoplasmic; sequence MPPPPFRDAP…WRTVYYSKYW (150 aa). Residues 36–47 are compositionally biased toward low complexity; that stretch reads SSDADSLPLSDP. Residues 151 to 171 form a helical; Signal-anchor for type II membrane protein membrane-spanning segment; sequence WRALIGVVVVLVLLVLVFLGL. Topologically, residues 172 to 1048 are extracellular; the sequence is ARSKQVGDEL…SRDLPLHGKY (877 aa). N-linked (GlcNAc...) asparagine glycans are attached at residues Asn-216, Asn-224, and Asn-410. The active site involves Asp-438. N-linked (GlcNAc...) asparagine glycosylation is found at Asn-481, Asn-520, Asn-578, Asn-895, and Asn-991. The disordered stretch occupies residues 508–527; sequence WERPPPDGEGGPNFSSWTDD.

Belongs to the glycosyl hydrolase 3 family.

The protein localises to the cell membrane. The catalysed reaction is Hydrolysis of terminal, non-reducing beta-D-glucosyl residues with release of beta-D-glucose.. It functions in the pathway glycan metabolism; cellulose degradation. Functionally, beta-glucosidases are one of a number of cellulolytic enzymes involved in the degradation of cellulosic biomass. Catalyzes the last step releasing glucose from the inhibitory cellobiose. The protein is Probable beta-glucosidase E (bglE) of Aspergillus oryzae (strain ATCC 42149 / RIB 40) (Yellow koji mold).